A 425-amino-acid polypeptide reads, in one-letter code: Glyco-Gag protein (425 aa).

Residues Met-1 to Arg-54 lie on the Cytoplasmic side of the membrane. The helical transmembrane segment at Leu-55 to Glu-75 threads the bilayer. Residues Thr-76 to Ala-425 are Extracellular-facing. Residue Asn-137 is glycosylated (N-linked (GlcNAc...) asparagine; by host). The segment at Val-174 to Gln-285 is disordered. Residues Phe-177–Ser-196 are compositionally biased toward pro residues. Positions Ala-197–Lys-209 are enriched in low complexity. Pro residues-rich tracts occupy residues Pro-213–Ser-223 and Glu-233–Pro-248.

In terms of processing, glycosylated by host. Post-translationally, cleaved by host near the middle of the molecule, releasing the c-terminal half containing capsid and nucleoprotein domains op GAG.

It is found in the host cell membrane. Plays a role in viral particle release. Presumably acts by facilitating the fission of the virion bud at the cell surface. This Felidae (cat family) protein is Glyco-Gag protein.